The following is a 212-amino-acid chain: MSEIAATIATDLLTIKAVTLRPNDPFTWASGIKSPIYTDNRLTISYPAVRQHIAHGIAAIIKREYPATEVIAGVATAGIPHAAWVAELLNLPLIYVRAKPKDHGAGRQIEGVLKPGQKVVMLDDLISTGGSVLQAAKAVQAAGGDIQAVGAIFSYALDAATQNFAAASLPLFSLSNYPELIKVARQADYIDDEELASLHTWRQDPEHWGVTD.

Residues R97, K101, H103, and 123–131 each bind 5-phospho-alpha-D-ribose 1-diphosphate; that span reads DDLISTGGS. S127 lines the orotate pocket.

It belongs to the purine/pyrimidine phosphoribosyltransferase family. PyrE subfamily. In terms of assembly, homodimer. Mg(2+) serves as cofactor.

It catalyses the reaction orotidine 5'-phosphate + diphosphate = orotate + 5-phospho-alpha-D-ribose 1-diphosphate. It participates in pyrimidine metabolism; UMP biosynthesis via de novo pathway; UMP from orotate: step 1/2. Functionally, catalyzes the transfer of a ribosyl phosphate group from 5-phosphoribose 1-diphosphate to orotate, leading to the formation of orotidine monophosphate (OMP). In Lactiplantibacillus plantarum (strain ATCC BAA-793 / NCIMB 8826 / WCFS1) (Lactobacillus plantarum), this protein is Orotate phosphoribosyltransferase.